Reading from the N-terminus, the 381-residue chain is tRNA-specific 2-thiouridylase MnmA (381 aa).

ATP contacts are provided by residues A14 to S21 and M40. C108 serves as the catalytic Nucleophile. C108 and C205 are disulfide-bonded. G132 is a binding site for ATP. Residues K155 to Q157 form an interaction with tRNA region. C205 functions as the Cysteine persulfide intermediate in the catalytic mechanism. Residues R309–Y310 form an interaction with tRNA region.

Belongs to the MnmA/TRMU family.

The protein resides in the cytoplasm. It carries out the reaction S-sulfanyl-L-cysteinyl-[protein] + uridine(34) in tRNA + AH2 + ATP = 2-thiouridine(34) in tRNA + L-cysteinyl-[protein] + A + AMP + diphosphate + H(+). Catalyzes the 2-thiolation of uridine at the wobble position (U34) of tRNA, leading to the formation of s(2)U34. This Deinococcus geothermalis (strain DSM 11300 / CIP 105573 / AG-3a) protein is tRNA-specific 2-thiouridylase MnmA.